Reading from the N-terminus, the 338-residue chain is Phenylalanine--tRNA ligase alpha subunit (338 aa).

Glutamate 253 contributes to the Mg(2+) binding site.

It belongs to the class-II aminoacyl-tRNA synthetase family. Phe-tRNA synthetase alpha subunit type 1 subfamily. As to quaternary structure, tetramer of two alpha and two beta subunits. The cofactor is Mg(2+).

The protein resides in the cytoplasm. The catalysed reaction is tRNA(Phe) + L-phenylalanine + ATP = L-phenylalanyl-tRNA(Phe) + AMP + diphosphate + H(+). This is Phenylalanine--tRNA ligase alpha subunit from Trichlorobacter lovleyi (strain ATCC BAA-1151 / DSM 17278 / SZ) (Geobacter lovleyi).